We begin with the raw amino-acid sequence, 154 residues long: Fimbrial protein (154 aa).

A propeptide spans 1-6 (leader sequence); the sequence is MKAQKG. F7 is modified (N-methylphenylalanine). A helical transmembrane segment spans residues 7–27; sequence FTLIELMIVVAIIGILAAIAI. C133 and C151 are disulfide-bonded. S154 carries O-linked (FucNAc...) serine glycosylation.

It belongs to the N-Me-Phe pilin family. The pili are polar flexible filaments of about 5.4 nanometers diameter and 2.5 micrometers average length; they consist of only a single polypeptide chain arranged in a helical configuration of five subunits per turn in the assembled pilus. Post-translationally, O-glycosylated; glycan consists of 5NbetaOHC47NFmPse(alpha2-4)Xyl(beta1-3)FucNAc in beta1-O linkage to Ser.

It is found in the fimbrium. The protein localises to the membrane. This Pseudomonas aeruginosa protein is Fimbrial protein (pilA).